Reading from the N-terminus, the 529-residue chain is UDP-glucuronosyltransferase 2B23 (529 aa).

The N-terminal stretch at 1–24 is a signal peptide; the sequence is MSVKWTSVILLIQLSFYFSSGSCG. Residues Asn67 and Asn68 are each glycosylated (N-linked (GlcNAc...) asparagine). The chain crosses the membrane as a helical span at residues 494–514; it reads IGFLLACVATVIFIIMKCCLF.

It belongs to the UDP-glycosyltransferase family. Expressed in several tissues, including the prostate, mammary gland, epididymis, testis and ovary.

It is found in the microsome membrane. Its subcellular location is the endoplasmic reticulum membrane. The enzyme catalyses glucuronate acceptor + UDP-alpha-D-glucuronate = acceptor beta-D-glucuronoside + UDP + H(+). Its function is as follows. UDPGTs are of major importance in the conjugation and subsequent elimination of potentially toxic xenobiotics and endogenous compounds. This isozyme has glucuronidating capacity on 6 steroids and the bile acid, hyodeoxycholic acid. May potentially play an important role in estrogen and androgen catabolism in peripheral steroid target tissues. The polypeptide is UDP-glucuronosyltransferase 2B23 (UGT2B23) (Macaca fascicularis (Crab-eating macaque)).